The chain runs to 278 residues: S-methyl-5'-thioadenosine phosphorylase (278 aa).

Phosphate is bound by residues Ser13, 55-56 (RH), and 88-89 (TA). Met190 is a binding site for substrate. A phosphate-binding site is contributed by Thr191. 214 to 216 (DYD) provides a ligand contact to substrate.

This sequence belongs to the PNP/MTAP phosphorylase family. MTAP subfamily. Homotrimer.

The protein localises to the cytoplasm. Its subcellular location is the nucleus. The enzyme catalyses S-methyl-5'-thioadenosine + phosphate = 5-(methylsulfanyl)-alpha-D-ribose 1-phosphate + adenine. The protein operates within amino-acid biosynthesis; L-methionine biosynthesis via salvage pathway; S-methyl-5-thio-alpha-D-ribose 1-phosphate from S-methyl-5'-thioadenosine (phosphorylase route): step 1/1. Catalyzes the reversible phosphorylation of S-methyl-5'-thioadenosine (MTA) to adenine and 5-methylthioribose-1-phosphate. Involved in the breakdown of MTA, a major by-product of polyamine biosynthesis. Responsible for the first step in the methionine salvage pathway after MTA has been generated from S-adenosylmethionine. Has broad substrate specificity with 6-aminopurine nucleosides as preferred substrates. This is S-methyl-5'-thioadenosine phosphorylase from Anopheles gambiae (African malaria mosquito).